A 445-amino-acid chain; its full sequence is Glucose-6-phosphate isomerase (445 aa).

Catalysis depends on E287, which acts as the Proton donor. Catalysis depends on residues H308 and K422.

Belongs to the GPI family.

It localises to the cytoplasm. It carries out the reaction alpha-D-glucose 6-phosphate = beta-D-fructose 6-phosphate. Its pathway is carbohydrate biosynthesis; gluconeogenesis. The protein operates within carbohydrate degradation; glycolysis; D-glyceraldehyde 3-phosphate and glycerone phosphate from D-glucose: step 2/4. Catalyzes the reversible isomerization of glucose-6-phosphate to fructose-6-phosphate. This chain is Glucose-6-phosphate isomerase, found in Bacteroides thetaiotaomicron (strain ATCC 29148 / DSM 2079 / JCM 5827 / CCUG 10774 / NCTC 10582 / VPI-5482 / E50).